The sequence spans 213 residues: Octanoyltransferase (213 aa).

Residues 32 to 207 enclose the BPL/LPL catalytic domain; it reads ESTLDEIWLV…NILALLNNPD (176 aa). Substrate is bound by residues 71-78, 138-140, and 151-153; these read RGGQVTYH, SLG, and GLA. Cys169 functions as the Acyl-thioester intermediate in the catalytic mechanism.

Belongs to the LipB family.

Its subcellular location is the cytoplasm. It carries out the reaction octanoyl-[ACP] + L-lysyl-[protein] = N(6)-octanoyl-L-lysyl-[protein] + holo-[ACP] + H(+). Its pathway is protein modification; protein lipoylation via endogenous pathway; protein N(6)-(lipoyl)lysine from octanoyl-[acyl-carrier-protein]: step 1/2. Catalyzes the transfer of endogenously produced octanoic acid from octanoyl-acyl-carrier-protein onto the lipoyl domains of lipoate-dependent enzymes. Lipoyl-ACP can also act as a substrate although octanoyl-ACP is likely to be the physiological substrate. The polypeptide is Octanoyltransferase (Escherichia coli (strain SMS-3-5 / SECEC)).